The following is a 273-amino-acid chain: 4-hydroxy-tetrahydrodipicolinate reductase (273 aa).

Residues 12–17 and Glu-38 each bind NAD(+); that span reads GAGGRM. An NADP(+)-binding site is contributed by Arg-39. Residues 102–104 and 126–129 contribute to the NAD(+) site; these read GTT and AANF. The active-site Proton donor/acceptor is His-159. His-160 provides a ligand contact to (S)-2,3,4,5-tetrahydrodipicolinate. Residue Lys-163 is the Proton donor of the active site. 169–170 serves as a coordination point for (S)-2,3,4,5-tetrahydrodipicolinate; that stretch reads GT.

This sequence belongs to the DapB family. As to quaternary structure, homotetramer.

The protein resides in the cytoplasm. The enzyme catalyses (S)-2,3,4,5-tetrahydrodipicolinate + NAD(+) + H2O = (2S,4S)-4-hydroxy-2,3,4,5-tetrahydrodipicolinate + NADH + H(+). It carries out the reaction (S)-2,3,4,5-tetrahydrodipicolinate + NADP(+) + H2O = (2S,4S)-4-hydroxy-2,3,4,5-tetrahydrodipicolinate + NADPH + H(+). It participates in amino-acid biosynthesis; L-lysine biosynthesis via DAP pathway; (S)-tetrahydrodipicolinate from L-aspartate: step 4/4. Its function is as follows. Catalyzes the conversion of 4-hydroxy-tetrahydrodipicolinate (HTPA) to tetrahydrodipicolinate. The chain is 4-hydroxy-tetrahydrodipicolinate reductase from Salmonella typhimurium (strain LT2 / SGSC1412 / ATCC 700720).